The following is a 251-amino-acid chain: uncharacterized protein (251 aa).

Position 12–36 (12–36 (VVTGASSGIGEATARTLAAQGFHVV)) interacts with NADP(+). A substrate-binding site is contributed by Ser136. The active-site Proton acceptor is the Tyr149.

Belongs to the short-chain dehydrogenases/reductases (SDR) family.

This is an uncharacterized protein from Mycobacterium tuberculosis (strain CDC 1551 / Oshkosh).